Here is a 125-residue protein sequence, read N- to C-terminus: Type II secretion system protein I (125 aa).

A propeptide spans 1–5 (leader sequence); it reads MKQQG. Methionine 6 bears the N-methylmethionine mark. A helical membrane pass occupies residues 6 to 26; sequence MTLLEVMVALVIFALAGLTVL.

This sequence belongs to the GSP I family. In terms of assembly, type II secretion is composed of four main components: the outer membrane complex, the inner membrane complex, the cytoplasmic secretion ATPase and the periplasm-spanning pseudopilus. Interacts with core component OutG. In terms of processing, cleaved by prepilin peptidase. Methylated by prepilin peptidase at the amino group of the N-terminal methionine once the leader sequence is cleaved by prepilin peptidase.

Its subcellular location is the cell inner membrane. Functionally, component of the type II secretion system required for the energy-dependent secretion of extracellular factors such as proteases and toxins from the periplasm. Part of the pseudopilus tip complex that is critical for the recognition and binding of secretion substrates. The chain is Type II secretion system protein I (outI) from Dickeya chrysanthemi (Pectobacterium chrysanthemi).